Consider the following 643-residue polypeptide: Immediate-early phosphoprotein 57 (643 aa).

2 disordered regions span residues 1–180 (MAQK…GGCA) and 194–329 (TGWG…QCPP). The segment covering 24-52 (LDFSESEEEEEEEESSSESESDEDSDMEV) has biased composition (acidic residues). Low complexity-rich tracts occupy residues 57–71 (QEAG…QPQQ) and 83–100 (QQPQ…QQQR). Basic and acidic residues predominate over residues 103 to 113 (KRGEESGDARP). The span at 162–171 (QQPQSQAAQP) shows a compositional bias: low complexity. Basic and acidic residues predominate over residues 215–241 (RRGDEDRRSGRDRRRREGRERDRESRS). The span at 284 to 297 (AGPSQAQAAQAARA) shows a compositional bias: low complexity. Over residues 298 to 307 (PRQEQGERRQ) the composition is skewed to basic and acidic residues. The span at 320 to 329 (QQCPPQQCPP) shows a compositional bias: pro residues.

The protein belongs to the herpesviridae UL69 family.

The sequence is that of Immediate-early phosphoprotein 57 (57) from Equus caballus (Horse).